The chain runs to 74 residues: uncharacterized protein (74 aa).

A coiled-coil region spans residues 25–62 (QQTIDRLAGLELRMKQLIRAIEVNNELLRTMQEQQNRV).

This is an uncharacterized protein from Bacillus subtilis (strain 168).